Reading from the N-terminus, the 402-residue chain is Phosphoglycerate kinase (402 aa).

Residues 24-26 (DLN), Arg39, 62-65 (HLGR), Arg121, and Arg161 each bind substrate. ATP contacts are provided by residues Lys211, Gly299, Glu330, and 359–362 (GGDS).

The protein belongs to the phosphoglycerate kinase family. Monomer.

It localises to the cytoplasm. The enzyme catalyses (2R)-3-phosphoglycerate + ATP = (2R)-3-phospho-glyceroyl phosphate + ADP. It participates in carbohydrate degradation; glycolysis; pyruvate from D-glyceraldehyde 3-phosphate: step 2/5. The sequence is that of Phosphoglycerate kinase from Mycolicibacterium gilvum (strain PYR-GCK) (Mycobacterium gilvum (strain PYR-GCK)).